Reading from the N-terminus, the 337-residue chain is DNA-directed RNA polymerase subunit alpha (337 aa).

Positions Met-1–Glu-233 are alpha N-terminal domain (alpha-NTD). The interval Phe-249–Tyr-337 is alpha C-terminal domain (alpha-CTD).

Belongs to the RNA polymerase alpha chain family. Homodimer. The RNAP catalytic core consists of 2 alpha, 1 beta, 1 beta' and 1 omega subunit. When a sigma factor is associated with the core the holoenzyme is formed, which can initiate transcription.

The catalysed reaction is RNA(n) + a ribonucleoside 5'-triphosphate = RNA(n+1) + diphosphate. Functionally, DNA-dependent RNA polymerase catalyzes the transcription of DNA into RNA using the four ribonucleoside triphosphates as substrates. In Bartonella quintana (strain Toulouse) (Rochalimaea quintana), this protein is DNA-directed RNA polymerase subunit alpha.